The sequence spans 278 residues: Large ribosomal subunit protein uL2 (278 aa).

The disordered stretch occupies residues 222-278; sequence GVVMNPIDHPHGGGEGRTSGGRHPVTPWGKPTKGKKTRSNKSTDKFILISRHKRKKK.

This sequence belongs to the universal ribosomal protein uL2 family. In terms of assembly, part of the 50S ribosomal subunit. Forms a bridge to the 30S subunit in the 70S ribosome.

Its function is as follows. One of the primary rRNA binding proteins. Required for association of the 30S and 50S subunits to form the 70S ribosome, for tRNA binding and peptide bond formation. It has been suggested to have peptidyltransferase activity; this is somewhat controversial. Makes several contacts with the 16S rRNA in the 70S ribosome. The sequence is that of Large ribosomal subunit protein uL2 from Rhodopseudomonas palustris (strain ATCC BAA-98 / CGA009).